The chain runs to 269 residues: Small ribosomal subunit protein eS1 (269 aa).

Disordered regions lie at residues 1–20 (MAVG…SKKK) and 249–269 (AASG…QESV).

It belongs to the eukaryotic ribosomal protein eS1 family. Component of the small ribosomal subunit. Mature ribosomes consist of a small (40S) and a large (60S) subunit. The 40S subunit contains about 33 different proteins and 1 molecule of RNA (18S). The 60S subunit contains about 49 different proteins and 3 molecules of RNA (28S, 5.8S and 5S).

The protein resides in the cytoplasm. The protein is Small ribosomal subunit protein eS1 of Anopheles darlingi (Mosquito).